Reading from the N-terminus, the 429-residue chain is Glutamate-1-semialdehyde 2,1-aminomutase 2 (429 aa).

An N6-(pyridoxal phosphate)lysine modification is found at lysine 268.

It belongs to the class-III pyridoxal-phosphate-dependent aminotransferase family. HemL subfamily. As to quaternary structure, homodimer. Pyridoxal 5'-phosphate is required as a cofactor.

Its subcellular location is the cytoplasm. The catalysed reaction is (S)-4-amino-5-oxopentanoate = 5-aminolevulinate. The protein operates within porphyrin-containing compound metabolism; protoporphyrin-IX biosynthesis; 5-aminolevulinate from L-glutamyl-tRNA(Glu): step 2/2. The sequence is that of Glutamate-1-semialdehyde 2,1-aminomutase 2 from Bacillus mycoides (strain KBAB4) (Bacillus weihenstephanensis).